A 477-amino-acid chain; its full sequence is Salivary plasminogen activator alpha 1 (477 aa).

The signal sequence occupies residues 1 to 36; sequence MVNTMKTKLLCVLLLCGAVFSLPRQETYRQLARGSR. Residues 40-82 enclose the Fibronectin type-I domain; the sequence is VACKDEITQMTYRRQESWLRPEVRSKRVEHCQCDRGQARCHTV. Intrachain disulfides connect cysteine 42/cysteine 72, cysteine 70/cysteine 79, cysteine 87/cysteine 98, cysteine 92/cysteine 109, cysteine 111/cysteine 120, cysteine 128/cysteine 209, cysteine 149/cysteine 191, cysteine 180/cysteine 204, cysteine 214/cysteine 345, cysteine 257/cysteine 273, cysteine 265/cysteine 334, cysteine 359/cysteine 434, cysteine 391/cysteine 407, and cysteine 424/cysteine 452. In terms of domain architecture, EGF-like spans 83-121; that stretch reads PVNSCSEPRCFNGGTCWQAVYFSDFVCQCPAGYTGKRCE. Residues 128-209 enclose the Kringle domain; it reads CYEGQGVTYR…TSESCSVPVC (82 aa). Asparagine 153 carries an N-linked (GlcNAc...) asparagine glycan. One can recognise a Peptidase S1 domain in the interval 226–476; sequence STGGLFTDIT…YLGWIRDNMH (251 aa). Active-site charge relay system residues include histidine 272 and aspartate 321. Residue asparagine 398 is glycosylated (N-linked (GlcNAc...) asparagine). Catalysis depends on serine 428, which acts as the Charge relay system.

It belongs to the peptidase S1 family. As to quaternary structure, monomer.

It localises to the secreted. It catalyses the reaction Specific cleavage of Arg-|-Val bond in plasminogen to form plasmin.. With respect to regulation, activity toward plasminogen is stimulated in the presence of fibrin I. Its function is as follows. Probably essential to support the feeding habits of this exclusively haematophagous animal. Potent thrombolytic agent. This is Salivary plasminogen activator alpha 1 from Desmodus rotundus (Vampire bat).